We begin with the raw amino-acid sequence, 419 residues long: Histidine--tRNA ligase (419 aa).

This sequence belongs to the class-II aminoacyl-tRNA synthetase family. In terms of assembly, homodimer.

Its subcellular location is the cytoplasm. The catalysed reaction is tRNA(His) + L-histidine + ATP = L-histidyl-tRNA(His) + AMP + diphosphate + H(+). In Synechococcus sp. (strain JA-3-3Ab) (Cyanobacteria bacterium Yellowstone A-Prime), this protein is Histidine--tRNA ligase.